A 309-amino-acid polypeptide reads, in one-letter code: ADP-L-glycero-D-manno-heptose-6-epimerase (309 aa).

Residues 10-11 (FI), 31-32 (DN), lysine 38, lysine 53, 75-79 (EGACS), and asparagine 92 contribute to the NADP(+) site. The active-site Proton acceptor is the tyrosine 140. Position 144 (lysine 144) interacts with NADP(+). Asparagine 169 contributes to the substrate binding site. NADP(+)-binding residues include valine 170 and lysine 178. Residue lysine 178 is the Proton acceptor of the active site. Substrate is bound by residues serine 180, histidine 187, 201–204 (FEGS), arginine 209, and tyrosine 272.

This sequence belongs to the NAD(P)-dependent epimerase/dehydratase family. HldD subfamily. As to quaternary structure, homopentamer. Requires NADP(+) as cofactor.

The enzyme catalyses ADP-D-glycero-beta-D-manno-heptose = ADP-L-glycero-beta-D-manno-heptose. It participates in nucleotide-sugar biosynthesis; ADP-L-glycero-beta-D-manno-heptose biosynthesis; ADP-L-glycero-beta-D-manno-heptose from D-glycero-beta-D-manno-heptose 7-phosphate: step 4/4. Functionally, catalyzes the interconversion between ADP-D-glycero-beta-D-manno-heptose and ADP-L-glycero-beta-D-manno-heptose via an epimerization at carbon 6 of the heptose. The sequence is that of ADP-L-glycero-D-manno-heptose-6-epimerase from Enterobacter sp. (strain 638).